A 473-amino-acid polypeptide reads, in one-letter code: ATP synthase subunit beta (473 aa).

153–160 (GGAGVGKT) is a binding site for ATP.

It belongs to the ATPase alpha/beta chains family. In terms of assembly, F-type ATPases have 2 components, CF(1) - the catalytic core - and CF(0) - the membrane proton channel. CF(1) has five subunits: alpha(3), beta(3), gamma(1), delta(1), epsilon(1). CF(0) has three main subunits: a(1), b(2) and c(9-12). The alpha and beta chains form an alternating ring which encloses part of the gamma chain. CF(1) is attached to CF(0) by a central stalk formed by the gamma and epsilon chains, while a peripheral stalk is formed by the delta and b chains.

The protein resides in the cell inner membrane. It carries out the reaction ATP + H2O + 4 H(+)(in) = ADP + phosphate + 5 H(+)(out). Functionally, produces ATP from ADP in the presence of a proton gradient across the membrane. The catalytic sites are hosted primarily by the beta subunits. This is ATP synthase subunit beta from Rickettsia rickettsii (strain Iowa).